The following is a 505-amino-acid chain: Deoxyguanosinetriphosphate triphosphohydrolase (505 aa).

In terms of domain architecture, HD spans 66-273; the sequence is RLTHSMEVQQ…MEAADDISYC (208 aa).

This sequence belongs to the dGTPase family. Type 1 subfamily. In terms of assembly, homotetramer. It depends on Mg(2+) as a cofactor.

It catalyses the reaction dGTP + H2O = 2'-deoxyguanosine + triphosphate + H(+). Functionally, dGTPase preferentially hydrolyzes dGTP over the other canonical NTPs. This chain is Deoxyguanosinetriphosphate triphosphohydrolase, found in Salmonella choleraesuis (strain SC-B67).